Reading from the N-terminus, the 394-residue chain is Cysteine desulfurase IscS (394 aa).

Pyridoxal 5'-phosphate-binding positions include 72 to 73 (GT), Asn152, Gln180, and 200 to 202 (SAH). An N6-(pyridoxal phosphate)lysine modification is found at Lys203. Thr238 is a binding site for pyridoxal 5'-phosphate. Cys326 functions as the Cysteine persulfide intermediate in the catalytic mechanism. [2Fe-2S] cluster is bound at residue Cys326.

Belongs to the class-V pyridoxal-phosphate-dependent aminotransferase family. NifS/IscS subfamily. Homodimer. Forms a heterotetramer with IscU, interacts with other sulfur acceptors. Pyridoxal 5'-phosphate serves as cofactor.

It is found in the cytoplasm. It carries out the reaction (sulfur carrier)-H + L-cysteine = (sulfur carrier)-SH + L-alanine. It participates in cofactor biosynthesis; iron-sulfur cluster biosynthesis. Master enzyme that delivers sulfur to a number of partners involved in Fe-S cluster assembly, tRNA modification or cofactor biosynthesis. Catalyzes the removal of elemental sulfur atoms from cysteine to produce alanine. Functions as a sulfur delivery protein for Fe-S cluster synthesis onto IscU, an Fe-S scaffold assembly protein, as well as other S acceptor proteins. The sequence is that of Cysteine desulfurase IscS from Dictyoglomus turgidum (strain DSM 6724 / Z-1310).